The primary structure comprises 159 residues: Protein A40 (159 aa).

At 1–9 the chain is on the cytoplasmic side; the sequence is MNKHKTDYA. A helical; Signal-anchor for type II membrane protein membrane pass occupies residues 10–30; that stretch reads GYACCVICGLIVGIIFTATLL. Residues 31-159 lie on the Extracellular side of the membrane; the sequence is KVVERKLVHT…TPKLHSCYTI (129 aa). A C-type lectin domain is found at 63–159; that stretch reads YNNKCIHLST…TPKLHSCYTI (97 aa).

The protein belongs to the poxviridae A40 protein family.

The protein localises to the host membrane. The chain is Protein A40 from Bos taurus (Bovine).